The sequence spans 170 residues: 3-hydroxydecanoyl-[acyl-carrier-protein] dehydratase (170 aa).

H71 is an active-site residue.

It belongs to the thioester dehydratase family. FabA subfamily. Homodimer.

Its subcellular location is the cytoplasm. The enzyme catalyses a (3R)-hydroxyacyl-[ACP] = a (2E)-enoyl-[ACP] + H2O. The catalysed reaction is (3R)-hydroxydecanoyl-[ACP] = (2E)-decenoyl-[ACP] + H2O. It carries out the reaction (2E)-decenoyl-[ACP] = (3Z)-decenoyl-[ACP]. The protein operates within lipid metabolism; fatty acid biosynthesis. Its function is as follows. Necessary for the introduction of cis unsaturation into fatty acids. Catalyzes the dehydration of (3R)-3-hydroxydecanoyl-ACP to E-(2)-decenoyl-ACP and then its isomerization to Z-(3)-decenoyl-ACP. Can catalyze the dehydratase reaction for beta-hydroxyacyl-ACPs with saturated chain lengths up to 16:0, being most active on intermediate chain length. In Chelativorans sp. (strain BNC1), this protein is 3-hydroxydecanoyl-[acyl-carrier-protein] dehydratase.